We begin with the raw amino-acid sequence, 616 residues long: Chaperone protein HscA homolog (616 aa).

Belongs to the heat shock protein 70 family.

Its function is as follows. Chaperone involved in the maturation of iron-sulfur cluster-containing proteins. Has a low intrinsic ATPase activity which is markedly stimulated by HscB. The sequence is that of Chaperone protein HscA homolog from Vibrio cholerae serotype O1 (strain M66-2).